Here is a 457-residue protein sequence, read N- to C-terminus: Cysteine--tRNA ligase (457 aa).

Cys-28 contributes to the Zn(2+) binding site. The 'HIGH' region signature appears at Met-30 to His-40. Zn(2+)-binding residues include Cys-209, His-234, and Glu-238. The 'KMSKS' region motif lies at Lys-266–Ser-270. Lys-269 is an ATP binding site.

The protein belongs to the class-I aminoacyl-tRNA synthetase family. Monomer. The cofactor is Zn(2+).

Its subcellular location is the cytoplasm. The enzyme catalyses tRNA(Cys) + L-cysteine + ATP = L-cysteinyl-tRNA(Cys) + AMP + diphosphate. The protein is Cysteine--tRNA ligase of Laribacter hongkongensis (strain HLHK9).